Consider the following 158-residue polypeptide: Small ribosomal subunit protein uS7 (158 aa).

The protein belongs to the universal ribosomal protein uS7 family. As to quaternary structure, part of the 30S ribosomal subunit. Contacts proteins S9 and S11.

In terms of biological role, one of the primary rRNA binding proteins, it binds directly to 16S rRNA where it nucleates assembly of the head domain of the 30S subunit. Is located at the subunit interface close to the decoding center, probably blocks exit of the E-site tRNA. This is Small ribosomal subunit protein uS7 from Parabacteroides distasonis (strain ATCC 8503 / DSM 20701 / CIP 104284 / JCM 5825 / NCTC 11152).